We begin with the raw amino-acid sequence, 102 residues long: Integration host factor subunit alpha (102 aa).

This sequence belongs to the bacterial histone-like protein family. As to quaternary structure, heterodimer of an alpha and a beta chain.

Its function is as follows. This protein is one of the two subunits of integration host factor, a specific DNA-binding protein that functions in genetic recombination as well as in transcriptional and translational control. This chain is Integration host factor subunit alpha, found in Buchnera aphidicola subsp. Acyrthosiphon pisum (strain 5A).